We begin with the raw amino-acid sequence, 217 residues long: Large ribosomal subunit protein uL4 (217 aa).

The segment at 42–100 (RAAARQGTHSTKTRGDVSGGGRKPYRQKGTGRARQGSTRAPQFTGGGVVHGPKPRDYSQ) is disordered.

The protein belongs to the universal ribosomal protein uL4 family. As to quaternary structure, part of the 50S ribosomal subunit.

One of the primary rRNA binding proteins, this protein initially binds near the 5'-end of the 23S rRNA. It is important during the early stages of 50S assembly. It makes multiple contacts with different domains of the 23S rRNA in the assembled 50S subunit and ribosome. Functionally, forms part of the polypeptide exit tunnel. This Mycobacterium avium (strain 104) protein is Large ribosomal subunit protein uL4.